The chain runs to 3526 residues: WD repeat and FYVE domain-containing protein 3 (3526 aa).

Phosphoserine occurs at positions 1942 and 2278. The tract at residues 2285-2981 (LTGSRRNRKE…PHPPKRVRSR (697 aa)) is sufficient for localization to p62 bodies/ALIS. Disordered stretches follow at residues 2403–2429 (ETNV…PARY) and 2459–2522 (SSEG…EKTD). Residues 2468 to 2477 (EPEHGEDTIA) are compositionally biased toward basic and acidic residues. S2492 is subject to Phosphoserine. The 126-residue stretch at 2531–2656 (EEGEKIQHMY…IRNKVYQRFL (126 aa)) folds into the BEACH-type PH domain. The segment at 2586 to 3526 (MHEPIIPRGA…RGSEDGPRNC (941 aa)) is interaction with SQSTM1. Residues 2683 to 2976 (GLLSTLVGEK…QLFKKPHPPK (294 aa)) form the BEACH domain. The interval 2981-3526 (RLNGDNAGIS…RGSEDGPRNC (546 aa)) is interaction with ATG5. WD repeat units follow at residues 3077-3115 (SEWG…EKAK), 3125-3164 (GHTD…FLTQ), 3167-3206 (GHRA…VSVN), and 3210-3254 (GRSQ…VPET). Residues 3272–3335 (AQIGQEAQDE…SGSDDSRRWS (64 aa)) are disordered. Acidic residues predominate over residues 3278-3290 (AQDEDSSDSEADE). The tract at residues 3313 to 3363 (AASCRATAAWCTDSGSDDSRRWSDQLSLDEKDGFIFVNYSEGQTRAHLQGP) is interaction with GABARAP. Residues S3335 and S3339 each carry the phosphoserine modification. Residues 3346-3349 (FIFV) carry the LC3-interacting region (LIR) motif. One copy of the WD 5 repeat lies at 3408–3447 (AHPAEVTALGISKDHSRILVGDSRGRVFSWSVSDQPGRSA). The FYVE-type zinc finger occupies 3454 to 3514 (DEGGDSCSGC…VCQNCYYNLQ (61 aa)). C3460, C3463, C3476, C3479, C3484, C3487, C3506, and C3509 together coordinate Zn(2+).

In terms of assembly, directly interacts with ATG5 and associates with the ATG12-ATG5-ATG16L complex. Interacts with p62/SQSTM1; this interaction is required to recruit WDFY3 to cytoplasmic bodies and to PML bodies. Directly interacts with GABARAP, GABARAPL1 and GABARAPL2; the interaction with GABARAP is required for WDFY3 recruitment to MAP1LC3B-positive p62/SQSTM1 bodies. Weakly interacts with MAP1LC3C; this interaction is direct. Does not interact with MAP1LC3A, nor MAP1LC3B. Interacts with TRAF6. Expressed in osteoclast and their mononuclear precursors (at protein level).

The protein localises to the nucleus membrane. Its subcellular location is the cytoplasm. It localises to the cytosol. It is found in the nucleus. The protein resides in the PML body. The protein localises to the membrane. Its subcellular location is the perikaryon. It localises to the cell projection. It is found in the axon. Functionally, required for selective macroautophagy (aggrephagy). Acts as an adapter protein by linking specific proteins destined for degradation to the core autophagic machinery members, such as the ATG5-ATG12-ATG16L E3-like ligase, SQSTM1 and LC3. Along with p62/SQSTM1, involved in the formation and autophagic degradation of cytoplasmic ubiquitin-containing inclusions (p62 bodies, ALIS/aggresome-like induced structures). Along with SQSTM1, required to recruit ubiquitinated proteins to PML bodies in the nucleus. Important for normal brain development. Essential for the formation of axonal tracts throughout the brain and spinal cord, including the formation of the major forebrain commissures. Involved in the ability of neural cells to respond to guidance cues. Required for cortical neurons to respond to the trophic effects of netrin-1/NTN1. Regulates Wnt signaling through the removal of DVL3 aggregates, likely in an autophagy-dependent manner. This process may be important for the determination of brain size during embryonic development. May regulate osteoclastogenesis by acting on the TNFSF11/RANKL - TRAF6 pathway. After cytokinetic abscission, involved in midbody remnant degradation. In vitro strongly binds to phosphatidylinositol 3-phosphate (PtdIns3P). This is WD repeat and FYVE domain-containing protein 3 (WDFY3) from Homo sapiens (Human).